Here is a 218-residue protein sequence, read N- to C-terminus: 7-cyano-7-deazaguanine synthase (218 aa).

ATP is bound at residue 9–19 (YSGGMDSFTVL). 4 residues coordinate Zn(2+): Cys-185, Cys-193, Cys-196, and Cys-199.

This sequence belongs to the QueC family. Zn(2+) serves as cofactor.

The enzyme catalyses 7-carboxy-7-deazaguanine + NH4(+) + ATP = 7-cyano-7-deazaguanine + ADP + phosphate + H2O + H(+). Its pathway is purine metabolism; 7-cyano-7-deazaguanine biosynthesis. In terms of biological role, catalyzes the ATP-dependent conversion of 7-carboxy-7-deazaguanine (CDG) to 7-cyano-7-deazaguanine (preQ(0)). The protein is 7-cyano-7-deazaguanine synthase of Pseudoalteromonas translucida (strain TAC 125).